Here is a 1829-residue protein sequence, read N- to C-terminus: MILDTDYITKDGKPIIRIFKKENGEFKIELDPHFQPYIYALLKDDSAIDEIKAIKGERHGKIVRVVDAVKVKKKFLGRDVEVWKLIFEHPQDVPALRGKIREHPAVIDIYEYDIPFAKRYLIDKGLIPMEGDEELKLMAFDIETFYHEGDEFGKGEIIMISYADEEEARVITWKNIDLPYVDVVSNEREMIKRFVQIVREKDPDVLITYNGDNFDLPYLIKRAEKLGVTLLLGRDKEHPEPKIHRMGDSFAVEIKGRIHFDLFPVVRRTINLPTYTLEAVYEAVLGKTKSKLGAEEIAAIWETEESMKKLAQYSMEDARATYELGKEFFPMEAELAKLIGQSVWDVSRSSTGNLVEWYLLRVAYERNELAPNKPDEEEYRRRLRTTYLGGYVKEPERGLWENIAYLDFRCHPADTKVIVKGKGIVNISDVKEGDYILGIDGWQRVKKVWKYHYEGKLININGLKCTPNHKVPVVTENDRQTRIRDSLAKSFLSGKVKGKIITTKLFEKIAEFEKNKPSEEEILKGELSGIILAEGTLLRKDIEYFDSSRGKKRISHQYRVEITIGENEKELLERILYIFDKLFGIRPSVKKKGDTNALKITTAKKAVYLQIEELLKNIESLYAPAVLRGFFERDATVNKIRSTIVVTQGTNNKWKIDIVAKLLDSLGIPYSRYEYKYIENGKELTKHILEITGRDGLILFQTLVGFISSEKNEALEKAIEVREMNRLKNNSFYNLSTFEVSSEYYKGEVYDLTLEGNPYYFANGILTHNSLYPSIIVTHNVSPDTLEREGCKNYDVAPIVGYKFCKDFPGFIPSILGELITMRQEIKKKMKATIDPIEKKMLDYRQRAVKLLANSILPNEWLPIIENGEVKFVKIGEFIDRYMEEQKDKVRTVDNTEVLEVDNIFAFSLNKESKKSEIKKVKALIRHKYKGEAYEVELNSGRKIHITRGHSLFTIRNGKIKEIWGEEVKVGDLIIVPKKVKLNEKEAVINIPELISKLPDEDTADVVMTTPVKGRKNFFKGMLRTLKWIFGEESKRIRTFNRYLFHLEELGFVKLLPRGYEVTDWEGLKRYRQLYEKLVKNLRYNGNKREYLVRFNDIKDSVSCFPRKELEEWKIGTXKGFRXKCILKVDEDFGKFLGYYVSEGYAGAQKNKTGGMSYSVKLYNENPNVLKDMKNIAEKFFGKVRVGKNCVDIPKKMAYLLAKSLCGVTAENKRIPSIIFDSSEPVRWAFLRAYFVGDGDIHPSKRLRLSTKSELLANQLVFLLNSLGVSSIKIGFDSGVYRVYINEDLPFLQTSRQKNTYYPNLIPKEVLEEIFGRKFQKNITFEKFKELADSGKLDKRKVKLLDFLLNGDIVLDRVKNVEKREYEGYVYDLSVEDNENFLVGFGLLYAHNSYYGYMGYPKARWYSKECAESVTAWGRHYIEMTIKEIEEKFGFKVLYADSVTGDTEIIVKRNGRIEFVPIEKLFERVDYRIGEKEYCILEDVEALTLDNRGKLIWKKVPYVMRHRAKKKVYRIWITNSWYIDVTEDHSLIVAEDGLKEARPMEIEGKSLIATKDDLSGVEYIKPHAIEEISYNGYVYDIEVEGTHRFFANGILVHNTDGFYATIPGEKPETIKKKAKEFLKYINSKLPGLLELEYEGFYLRGFFVAKKRYAVIDEEGRITTRGLEVVRRDWSEIAKETQAKVLEAILKEDSVEKAVEIVKDVVEEIAKYQVPLEKLVIHEQITKDLSEYKAIGPHVAIAKRLAAKGIKVRPGTIISYIVLRGSGKISDRVILLSEYDPKKHKYDPDYYIENQVLPAVLRILEAFGYRKEDLKYQSSKQVGLDAWLKK.

2 DOD-type homing endonuclease domains span residues 527-668 and 1136-1269; these read LSGI…SLGI and FLGY…SLGV.

The protein belongs to the DNA polymerase type-B family. Post-translationally, this protein undergoes a protein self splicing that involves a post-translational excision of the three intervening regions (inteins) followed by peptide ligation.

It carries out the reaction DNA(n) + a 2'-deoxyribonucleoside 5'-triphosphate = DNA(n+1) + diphosphate. This chain is DNA polymerase (pol), found in Thermococcus aggregans.